We begin with the raw amino-acid sequence, 702 residues long: Ribosomal RNA large subunit methyltransferase K/L (702 aa).

In terms of domain architecture, THUMP spans 43-154 (LVYQSLMWSR…KETASIALDL (112 aa)).

This sequence belongs to the methyltransferase superfamily. RlmKL family.

The protein localises to the cytoplasm. The catalysed reaction is guanosine(2445) in 23S rRNA + S-adenosyl-L-methionine = N(2)-methylguanosine(2445) in 23S rRNA + S-adenosyl-L-homocysteine + H(+). It catalyses the reaction guanosine(2069) in 23S rRNA + S-adenosyl-L-methionine = N(2)-methylguanosine(2069) in 23S rRNA + S-adenosyl-L-homocysteine + H(+). Functionally, specifically methylates the guanine in position 2445 (m2G2445) and the guanine in position 2069 (m7G2069) of 23S rRNA. This chain is Ribosomal RNA large subunit methyltransferase K/L, found in Escherichia coli O6:H1 (strain CFT073 / ATCC 700928 / UPEC).